The chain runs to 360 residues: Meiosis-inducing protein 1 (360 aa).

The tract at residues S102 to L135 is disordered. Residues S126–L135 show a composition bias toward low complexity.

In terms of assembly, interacts with UME6.

The protein resides in the nucleus. In terms of biological role, transcription factor required for sporulation and for early sporulation-specific genes expression. Positive regulator of SME1/IME2 expression. Directly activates expression of SLZ1 during meiosis. The chain is Meiosis-inducing protein 1 (IME1) from Saccharomyces cerevisiae (strain ATCC 204508 / S288c) (Baker's yeast).